Reading from the N-terminus, the 476-residue chain is Aspartyl/glutamyl-tRNA(Asn/Gln) amidotransferase subunit B (476 aa).

It belongs to the GatB/GatE family. GatB subfamily. As to quaternary structure, heterotrimer of A, B and C subunits.

It catalyses the reaction L-glutamyl-tRNA(Gln) + L-glutamine + ATP + H2O = L-glutaminyl-tRNA(Gln) + L-glutamate + ADP + phosphate + H(+). It carries out the reaction L-aspartyl-tRNA(Asn) + L-glutamine + ATP + H2O = L-asparaginyl-tRNA(Asn) + L-glutamate + ADP + phosphate + 2 H(+). Its function is as follows. Allows the formation of correctly charged Asn-tRNA(Asn) or Gln-tRNA(Gln) through the transamidation of misacylated Asp-tRNA(Asn) or Glu-tRNA(Gln) in organisms which lack either or both of asparaginyl-tRNA or glutaminyl-tRNA synthetases. The reaction takes place in the presence of glutamine and ATP through an activated phospho-Asp-tRNA(Asn) or phospho-Glu-tRNA(Gln). This chain is Aspartyl/glutamyl-tRNA(Asn/Gln) amidotransferase subunit B, found in Neisseria meningitidis serogroup C / serotype 2a (strain ATCC 700532 / DSM 15464 / FAM18).